An 843-amino-acid chain; its full sequence is Protein kintoun (843 aa).

4 disordered regions span residues 212–242 (PTAEQLEPHPLQNIYPTAPPTSNPEPRVHPM), 371–417 (FSRE…PVHS), 545–672 (YTVK…GASQ), and 761–843 (KKNQ…DDVM). Serine 376 carries the phosphoserine modification. Over residues 387–397 (PVEEEEADADL) the composition is skewed to acidic residues. The segment covering 564 to 573 (VKFDHNKESL) has biased composition (basic and acidic residues). The span at 584–593 (TEEDEVEEQH) shows a compositional bias: acidic residues. Basic residues predominate over residues 605 to 619 (QNKKPSKKQRKRNKK). Over residues 658–671 (YSECNDSSVGSGAS) the composition is skewed to polar residues. A compositionally biased stretch (basic residues) spans 761–775 (KKNQKRRDLKLRAQQ). Serine 779 carries the phosphoserine modification.

Belongs to the PIH1 family. Kintoun subfamily. In terms of assembly, interacts with Pp1alpha-96A, Pp1-87B, Pp1-13C and flw.

The protein localises to the cytoplasm. Its function is as follows. Required for cytoplasmic pre-assembly of axonemal dyneins, thereby playing a central role in motility in cilia and flagella. Involved in pre-assembly of dynein arm complexes in the cytoplasm before intraflagellar transport loads them for the ciliary compartment. This Drosophila ananassae (Fruit fly) protein is Protein kintoun.